A 39-amino-acid chain; its full sequence is Photosystem II reaction center protein J (39 aa).

A helical transmembrane segment spans residues Ile7 to Phe27.

The protein belongs to the PsbJ family. PSII is composed of 1 copy each of membrane proteins PsbA, PsbB, PsbC, PsbD, PsbE, PsbF, PsbH, PsbI, PsbJ, PsbK, PsbL, PsbM, PsbT, PsbX, PsbY, PsbZ, Psb30/Ycf12, at least 3 peripheral proteins of the oxygen-evolving complex and a large number of cofactors. It forms dimeric complexes.

It localises to the plastid. Its subcellular location is the chloroplast thylakoid membrane. One of the components of the core complex of photosystem II (PSII). PSII is a light-driven water:plastoquinone oxidoreductase that uses light energy to abstract electrons from H(2)O, generating O(2) and a proton gradient subsequently used for ATP formation. It consists of a core antenna complex that captures photons, and an electron transfer chain that converts photonic excitation into a charge separation. This is Photosystem II reaction center protein J from Trieres chinensis (Marine centric diatom).